The chain runs to 616 residues: Dihydroxy-acid dehydratase (616 aa).

Asp-81 contacts Mg(2+). Cys-122 lines the [2Fe-2S] cluster pocket. Positions 123 and 124 each coordinate Mg(2+). Lys-124 carries the post-translational modification N6-carboxylysine. Cys-195 serves as a coordination point for [2Fe-2S] cluster. Glu-491 provides a ligand contact to Mg(2+). Ser-517 acts as the Proton acceptor in catalysis.

Belongs to the IlvD/Edd family. As to quaternary structure, homodimer. [2Fe-2S] cluster serves as cofactor. Mg(2+) is required as a cofactor.

The catalysed reaction is (2R)-2,3-dihydroxy-3-methylbutanoate = 3-methyl-2-oxobutanoate + H2O. It carries out the reaction (2R,3R)-2,3-dihydroxy-3-methylpentanoate = (S)-3-methyl-2-oxopentanoate + H2O. It functions in the pathway amino-acid biosynthesis; L-isoleucine biosynthesis; L-isoleucine from 2-oxobutanoate: step 3/4. The protein operates within amino-acid biosynthesis; L-valine biosynthesis; L-valine from pyruvate: step 3/4. In terms of biological role, functions in the biosynthesis of branched-chain amino acids. Catalyzes the dehydration of (2R,3R)-2,3-dihydroxy-3-methylpentanoate (2,3-dihydroxy-3-methylvalerate) into 2-oxo-3-methylpentanoate (2-oxo-3-methylvalerate) and of (2R)-2,3-dihydroxy-3-methylbutanoate (2,3-dihydroxyisovalerate) into 2-oxo-3-methylbutanoate (2-oxoisovalerate), the penultimate precursor to L-isoleucine and L-valine, respectively. The polypeptide is Dihydroxy-acid dehydratase (Escherichia coli O17:K52:H18 (strain UMN026 / ExPEC)).